Consider the following 246-residue polypeptide: tRNA pseudouridine synthase A (246 aa).

The Nucleophile role is filled by Asp-52. Residue Tyr-111 participates in substrate binding.

Belongs to the tRNA pseudouridine synthase TruA family. Homodimer.

It catalyses the reaction uridine(38/39/40) in tRNA = pseudouridine(38/39/40) in tRNA. Functionally, formation of pseudouridine at positions 38, 39 and 40 in the anticodon stem and loop of transfer RNAs. This Borreliella afzelii (strain PKo) (Borrelia afzelii) protein is tRNA pseudouridine synthase A.